The sequence spans 211 residues: ATP phosphoribosyltransferase (211 aa).

Belongs to the ATP phosphoribosyltransferase family. Short subfamily. In terms of assembly, heteromultimer composed of HisG and HisZ subunits.

The protein resides in the cytoplasm. It catalyses the reaction 1-(5-phospho-beta-D-ribosyl)-ATP + diphosphate = 5-phospho-alpha-D-ribose 1-diphosphate + ATP. It functions in the pathway amino-acid biosynthesis; L-histidine biosynthesis; L-histidine from 5-phospho-alpha-D-ribose 1-diphosphate: step 1/9. Functionally, catalyzes the condensation of ATP and 5-phosphoribose 1-diphosphate to form N'-(5'-phosphoribosyl)-ATP (PR-ATP). Has a crucial role in the pathway because the rate of histidine biosynthesis seems to be controlled primarily by regulation of HisG enzymatic activity. The protein is ATP phosphoribosyltransferase of Bacillus cereus (strain G9842).